Consider the following 160-residue polypeptide: Transcription elongation factor GreA (160 aa).

The stretch at 2–81 (AEKKNILTYE…KNAEVVVEDE (80 aa)) forms a coiled coil. Residues 36-55 (KEAREQGDLSENAEYDAAKD) are disordered.

It belongs to the GreA/GreB family.

Functionally, necessary for efficient RNA polymerase transcription elongation past template-encoded arresting sites. The arresting sites in DNA have the property of trapping a certain fraction of elongating RNA polymerases that pass through, resulting in locked ternary complexes. Cleavage of the nascent transcript by cleavage factors such as GreA or GreB allows the resumption of elongation from the new 3'terminus. GreA releases sequences of 2 to 3 nucleotides. The sequence is that of Transcription elongation factor GreA from Lachnoclostridium phytofermentans (strain ATCC 700394 / DSM 18823 / ISDg) (Clostridium phytofermentans).